The following is a 462-amino-acid chain: Glutamate--tRNA ligase (462 aa).

Residues 11–21 (PSPTGFIHLGN) carry the 'HIGH' region motif. A 'KMSKS' region motif is present at residues 243-247 (KMSKR). Lys-246 lines the ATP pocket.

It belongs to the class-I aminoacyl-tRNA synthetase family. Glutamate--tRNA ligase type 1 subfamily. As to quaternary structure, monomer.

It is found in the cytoplasm. It carries out the reaction tRNA(Glu) + L-glutamate + ATP = L-glutamyl-tRNA(Glu) + AMP + diphosphate. Its function is as follows. Catalyzes the attachment of glutamate to tRNA(Glu) in a two-step reaction: glutamate is first activated by ATP to form Glu-AMP and then transferred to the acceptor end of tRNA(Glu). The protein is Glutamate--tRNA ligase of Albidiferax ferrireducens (strain ATCC BAA-621 / DSM 15236 / T118) (Rhodoferax ferrireducens).